Consider the following 171-residue polypeptide: UPF0398 protein SPy_1647/M5005_Spy1353 (171 aa).

It belongs to the UPF0398 family.

In Streptococcus pyogenes serotype M1, this protein is UPF0398 protein SPy_1647/M5005_Spy1353.